Reading from the N-terminus, the 271-residue chain is Tryptophan synthase alpha chain (271 aa).

Catalysis depends on proton acceptor residues Glu49 and Asp60.

The protein belongs to the TrpA family. Tetramer of two alpha and two beta chains.

The catalysed reaction is (1S,2R)-1-C-(indol-3-yl)glycerol 3-phosphate + L-serine = D-glyceraldehyde 3-phosphate + L-tryptophan + H2O. It functions in the pathway amino-acid biosynthesis; L-tryptophan biosynthesis; L-tryptophan from chorismate: step 5/5. In terms of biological role, the alpha subunit is responsible for the aldol cleavage of indoleglycerol phosphate to indole and glyceraldehyde 3-phosphate. The sequence is that of Tryptophan synthase alpha chain from Burkholderia cenocepacia (strain ATCC BAA-245 / DSM 16553 / LMG 16656 / NCTC 13227 / J2315 / CF5610) (Burkholderia cepacia (strain J2315)).